Here is a 363-residue protein sequence, read N- to C-terminus: Melanoma-associated antigen B16 (363 aa).

The disordered stretch occupies residues 33 to 124 (EPCSSPHLMA…PDQSDSTDLP (92 aa)). Positions 82 to 97 (ASTSSDLQHPYDSSSE) are enriched in low complexity. The MAGE domain maps to 128-327 (VDGKVDFLVN…TVFLSQYEEA (200 aa)). Residues 342–363 (HADSSSTSGESSSDTSSNFSQV) form a disordered region.

This chain is Melanoma-associated antigen B16 (Mageb16), found in Mus musculus (Mouse).